We begin with the raw amino-acid sequence, 105 residues long: Cell division protein FtsB (105 aa).

Over 1–3 the chain is Cytoplasmic; the sequence is MKP. The helical transmembrane segment at 4-21 threads the bilayer; that stretch reads FVLVLFALLALLQYRLWF. The Periplasmic portion of the chain corresponds to 22 to 105; it reads GENSLTEYFT…RSSEQSQDNQ (84 aa). A coiled-coil region spans residues 38 to 75; that stretch reads HQQSGNAELLERNEVLKEEIQDLKSGTEALEERARNEL.

Belongs to the FtsB family. As to quaternary structure, part of a complex composed of FtsB, FtsL and FtsQ.

It localises to the cell inner membrane. In terms of biological role, essential cell division protein. May link together the upstream cell division proteins, which are predominantly cytoplasmic, with the downstream cell division proteins, which are predominantly periplasmic. This chain is Cell division protein FtsB, found in Shewanella amazonensis (strain ATCC BAA-1098 / SB2B).